The primary structure comprises 415 residues: Serine--tRNA ligase (415 aa).

231 to 233 (TAE) contributes to the L-serine binding site. 262–264 (RSE) contacts ATP. An L-serine-binding site is contributed by glutamate 285. 349–352 (EISS) provides a ligand contact to ATP. Serine 383 is a binding site for L-serine.

It belongs to the class-II aminoacyl-tRNA synthetase family. Type-1 seryl-tRNA synthetase subfamily. Homodimer. The tRNA molecule binds across the dimer.

The protein localises to the cytoplasm. The enzyme catalyses tRNA(Ser) + L-serine + ATP = L-seryl-tRNA(Ser) + AMP + diphosphate + H(+). The catalysed reaction is tRNA(Sec) + L-serine + ATP = L-seryl-tRNA(Sec) + AMP + diphosphate + H(+). It functions in the pathway aminoacyl-tRNA biosynthesis; selenocysteinyl-tRNA(Sec) biosynthesis; L-seryl-tRNA(Sec) from L-serine and tRNA(Sec): step 1/1. Functionally, catalyzes the attachment of serine to tRNA(Ser). Is also able to aminoacylate tRNA(Sec) with serine, to form the misacylated tRNA L-seryl-tRNA(Sec), which will be further converted into selenocysteinyl-tRNA(Sec). In Helicobacter pylori (strain P12), this protein is Serine--tRNA ligase.